Consider the following 325-residue polypeptide: Probable flavonol synthase 5 (325 aa).

Positions 1-21 (MEEERDHNASESSLPSLSKQL) are disordered. Residues 10-21 (SESSLPSLSKQL) are compositionally biased toward polar residues. The 101-residue stretch at 180 to 280 (TAEYVLRVNF…RISWPVFVAP (101 aa)) folds into the Fe2OG dioxygenase domain. 2-oxoglutarate is bound at residue 188–190 (NFY). Residues His205, Asp207, and His261 each contribute to the Fe cation site. 271–273 (RIS) contributes to the 2-oxoglutarate binding site.

This sequence belongs to the iron/ascorbate-dependent oxidoreductase family. The cofactor is Fe(2+). In terms of tissue distribution, expressed in young seedlings.

The catalysed reaction is a (2R,3R)-dihydroflavonol + 2-oxoglutarate + O2 = a flavonol + succinate + CO2 + H2O. It functions in the pathway secondary metabolite biosynthesis; flavonoid biosynthesis. This chain is Probable flavonol synthase 5 (FLS5), found in Arabidopsis thaliana (Mouse-ear cress).